The chain runs to 750 residues: Probable methylmalonyl-CoA mutase large subunit (750 aa).

(R)-methylmalonyl-CoA-binding residues include Y91, M94, T101, R103, Y105, and S130. 2 residues coordinate cob(II)alamin: F133 and A155. (R)-methylmalonyl-CoA-binding residues include T211 and Q213. V222 and R223 together coordinate cob(II)alamin. (R)-methylmalonyl-CoA-binding residues include R223, H260, R299, and S301. Cob(II)alamin-binding residues include G349, E386, A389, G628, H629, D630, R631, S674, L676, G705, and T728. In terms of domain architecture, B12-binding spans 616–748; it reads RPRILIAKMG…HRLAERLGYT (133 aa).

The protein belongs to the methylmalonyl-CoA mutase family. In terms of assembly, heterodimer of an alpha and a beta chain. Requires adenosylcob(III)alamin as cofactor.

It catalyses the reaction (R)-methylmalonyl-CoA = succinyl-CoA. Its pathway is metabolic intermediate metabolism; propanoyl-CoA degradation; succinyl-CoA from propanoyl-CoA: step 3/3. In terms of biological role, catalyzes the isomerization of succinyl-CoA to methylmalonyl-CoA during synthesis of propionate from tricarboxylic acid-cycle intermediates. The protein is Probable methylmalonyl-CoA mutase large subunit (mutB) of Mycobacterium bovis (strain ATCC BAA-935 / AF2122/97).